Here is a 906-residue protein sequence, read N- to C-terminus: Ectonucleotide pyrophosphatase/phosphodiesterase family member 1 (906 aa).

Positions 1-25 (MERDGEQAGQGPRHGPAGNGRELES) are disordered. Residues 1 to 58 (MERDGEQAGQGPRHGPAGNGRELESPAAASLLAPMDLGEEPLEKAERARTAKDPNTYK) are Cytoplasmic-facing. Ser25 carries the phosphoserine modification. Positions 27–34 (AAASLLAP) match the Di-leucine motif motif. A helical; Signal-anchor for type II membrane protein transmembrane segment spans residues 59–79 (VLSLVLSVCVLTTILGCIFGL). Residues 80-906 (KPSCAKEVKS…THLPIFSQED (827 aa)) are Extracellular-facing. 2 consecutive SMB domains span residues 86 to 126 (EVKS…VEPT) and 127 to 170 (HIWT…QEKK). 10 disulfide bridges follow: Cys90-Cys104, Cys94-Cys122, Cys102-Cys115, Cys108-Cys114, Cys131-Cys148, Cys136-Cys166, Cys146-Cys159, Cys152-Cys158, Cys177-Cys223, and Cys185-Cys397. A glycan (N-linked (GlcNAc...) asparagine) is linked at Asn161. Residues 173-573 (VEEACETIDA…APNNESHGSL (401 aa)) form a phosphodiesterase region. Residues Asp200, Thr238, and Asn259 each contribute to the AMP site. Asp200 and Thr238 together coordinate Zn(2+). The AMP-threonine intermediate role is filled by Thr238. The CMP site is built by Thr238 and Asn259. DTMP-binding residues include Thr238 and Asn259. 2 residues coordinate GMP: Thr238 and Asn259. Thr238 carries the post-translational modification Phosphothreonine. Residue Asn267 is glycosylated (N-linked (GlcNAc...) asparagine). Leu272, Lys277, and Tyr322 together coordinate GMP. Lys277 and Tyr322 together coordinate AMP. Residues Lys277 and Tyr322 each contribute to the CMP site. A dTMP-binding site is contributed by Tyr322. N-linked (GlcNAc...) asparagine glycosylation occurs at Asn323. Asp358 lines the AMP pocket. Zn(2+)-binding residues include Asp358, His362, Asp405, and His406. Residue Asp358 participates in CMP binding. Asp358 contacts dTMP. Asp358 provides a ligand contact to GMP. 2',3'-cGAMP is bound at residue His362. His406 is a binding site for AMP. Residue His406 coordinates CMP. A dTMP-binding site is contributed by His406. Residue His406 coordinates GMP. Cystine bridges form between Cys413-Cys512, Cys462-Cys849, Cys596-Cys653, Cys607-Cys707, Cys609-Cys692, and Cys819-Cys829. Residue Asn459 is glycosylated (N-linked (GlcNAc...) asparagine). Residue Ser514 participates in 2',3'-cGAMP binding. An AMP-binding site is contributed by His517. His517 lines the Zn(2+) pocket. His517 contacts CMP. His517 serves as a coordination point for dTMP. His517 contacts GMP. 2 N-linked (GlcNAc...) asparagine glycosylation sites follow: Asn567 and Asn624. The linker stretch occupies residues 579 to 628 (KPIYTPSHPKEESFLSQCPIKSVSSDLGCTCDPSIVPIMDFEKQFNLTTD). Residues 635-906 (SMTVPNGRPR…THLPIFSQED (272 aa)) form a nuclease-like domain region. Ca(2+) is bound by residues Asp781, Asp783, Asp785, Arg787, and Asp789.

Belongs to the nucleotide pyrophosphatase/phosphodiesterase family. As to quaternary structure, ectonucleotide pyrophosphatase/phosphodiesterase family member 1: Homodimer. Ectonucleotide pyrophosphatase/phosphodiesterase family member 1: Interacts with INSR; leading to inhibit INSR autophosphorylation and subsequent activation of INSR kinase activity. Ectonucleotide pyrophosphatase/phosphodiesterase family member 1, secreted form: Monomeric. It depends on Zn(2+) as a cofactor. The secreted form is produced through cleavage at Lys-85 by intracellular processing.

It is found in the cell membrane. The protein localises to the basolateral cell membrane. Its subcellular location is the secreted. The enzyme catalyses Hydrolytically removes 5'-nucleotides successively from the 3'-hydroxy termini of 3'-hydroxy-terminated oligonucleotides.. It carries out the reaction a ribonucleoside 5'-triphosphate + H2O = a ribonucleoside 5'-phosphate + diphosphate + H(+). The catalysed reaction is ATP + H2O = AMP + diphosphate + H(+). It catalyses the reaction UTP + H2O = UMP + diphosphate + H(+). The enzyme catalyses GTP + H2O = GMP + diphosphate + H(+). It carries out the reaction CTP + H2O = CMP + diphosphate + H(+). The catalysed reaction is 2',3'-cGAMP + 2 H2O = GMP + AMP + 2 H(+). It catalyses the reaction P(1),P(4)-bis(5'-adenosyl) tetraphosphate + H2O = AMP + ATP + 2 H(+). The enzyme catalyses 3',5'-cyclic AMP + H2O = AMP + H(+). With respect to regulation, at low concentrations of ATP, a phosphorylated intermediate is formed which inhibits further hydrolysis. Its function is as follows. Nucleotide pyrophosphatase that generates diphosphate (PPi) and functions in bone mineralization and soft tissue calcification by regulating pyrophosphate levels. PPi inhibits bone mineralization and soft tissue calcification by binding to nascent hydroxyapatite crystals, thereby preventing further growth of these crystals. Preferentially hydrolyzes ATP, but can also hydrolyze other nucleoside 5' triphosphates such as GTP, CTP and UTP to their corresponding monophosphates with release of pyrophosphate, as well as diadenosine polyphosphates, and also 3',5'-cAMP to AMP. May also be involved in the regulation of the availability of nucleotide sugars in the endoplasmic reticulum and Golgi, and the regulation of purinergic signaling. Inhibits ectopic joint calcification and maintains articular chondrocytes by repressing hedgehog signaling; it is however unclear whether hedgehog inhibition is direct or indirect. Appears to modulate insulin sensitivity. Also involved in melanogenesis. Also able to hydrolyze 2',3'-cGAMP (cyclic GMP-AMP), a second messenger that activates TMEM173/STING and triggers type-I interferon production. 2',3'-cGAMP degradation takes place in the lumen or extracellular space, and not in the cytosol where it is produced; the role of 2',3'-cGAMP hydrolysis is therefore unclear. Not able to hydrolyze the 2',3'-cGAMP linkage isomer 3'-3'-cGAMP. In Rattus norvegicus (Rat), this protein is Ectonucleotide pyrophosphatase/phosphodiesterase family member 1.